The primary structure comprises 592 residues: 2-succinyl-5-enolpyruvyl-6-hydroxy-3-cyclohexene-1-carboxylate synthase (592 aa).

It belongs to the TPP enzyme family. MenD subfamily. As to quaternary structure, homodimer. Requires Mg(2+) as cofactor. Mn(2+) is required as a cofactor. It depends on thiamine diphosphate as a cofactor.

The catalysed reaction is isochorismate + 2-oxoglutarate + H(+) = 5-enolpyruvoyl-6-hydroxy-2-succinyl-cyclohex-3-ene-1-carboxylate + CO2. Its pathway is quinol/quinone metabolism; 1,4-dihydroxy-2-naphthoate biosynthesis; 1,4-dihydroxy-2-naphthoate from chorismate: step 2/7. It functions in the pathway quinol/quinone metabolism; menaquinone biosynthesis. In terms of biological role, catalyzes the thiamine diphosphate-dependent decarboxylation of 2-oxoglutarate and the subsequent addition of the resulting succinic semialdehyde-thiamine pyrophosphate anion to isochorismate to yield 2-succinyl-5-enolpyruvyl-6-hydroxy-3-cyclohexene-1-carboxylate (SEPHCHC). The polypeptide is 2-succinyl-5-enolpyruvyl-6-hydroxy-3-cyclohexene-1-carboxylate synthase (Leifsonia xyli subsp. xyli (strain CTCB07)).